The primary structure comprises 414 residues: tRNA(Ile)-lysidine synthase (414 aa).

17 to 22 (SGGCDS) lines the ATP pocket.

It belongs to the tRNA(Ile)-lysidine synthase family.

It localises to the cytoplasm. It carries out the reaction cytidine(34) in tRNA(Ile2) + L-lysine + ATP = lysidine(34) in tRNA(Ile2) + AMP + diphosphate + H(+). In terms of biological role, ligates lysine onto the cytidine present at position 34 of the AUA codon-specific tRNA(Ile) that contains the anticodon CAU, in an ATP-dependent manner. Cytidine is converted to lysidine, thus changing the amino acid specificity of the tRNA from methionine to isoleucine. This chain is tRNA(Ile)-lysidine synthase, found in Exiguobacterium sibiricum (strain DSM 17290 / CCUG 55495 / CIP 109462 / JCM 13490 / 255-15).